A 566-amino-acid polypeptide reads, in one-letter code: Malate synthase, glyoxysomal (566 aa).

The Proton acceptor role is filled by Arg182. The Proton donor role is filled by Asp467. The Microbody targeting signal motif lies at 564 to 566 (SRL).

The protein belongs to the malate synthase family.

The protein resides in the glyoxysome. It carries out the reaction glyoxylate + acetyl-CoA + H2O = (S)-malate + CoA + H(+). It functions in the pathway carbohydrate metabolism; glyoxylate cycle; (S)-malate from isocitrate: step 2/2. The protein is Malate synthase, glyoxysomal of Cucurbita maxima (Pumpkin).